Reading from the N-terminus, the 702-residue chain is Polyribonucleotide nucleotidyltransferase (702 aa).

Mg(2+)-binding residues include D485 and D491. Positions 552 to 612 (PRTEIICIDP…EGVKKAISII (61 aa)) constitute a KH domain. In terms of domain architecture, S1 motif spans 622–690 (GEIYLGKVTK…NQGRINLSRK (69 aa)).

This sequence belongs to the polyribonucleotide nucleotidyltransferase family. Requires Mg(2+) as cofactor.

It is found in the cytoplasm. The enzyme catalyses RNA(n+1) + phosphate = RNA(n) + a ribonucleoside 5'-diphosphate. Functionally, involved in mRNA degradation. Catalyzes the phosphorolysis of single-stranded polyribonucleotides processively in the 3'- to 5'-direction. The polypeptide is Polyribonucleotide nucleotidyltransferase (Clostridium botulinum (strain Loch Maree / Type A3)).